Reading from the N-terminus, the 385-residue chain is Spermidine/putrescine import ATP-binding protein PotA (385 aa).

In terms of domain architecture, ABC transporter spans I6 to I238. ATP is bound at residue G40 to S47.

This sequence belongs to the ABC transporter superfamily. Spermidine/putrescine importer (TC 3.A.1.11.1) family. As to quaternary structure, the complex is composed of two ATP-binding proteins (PotA), two transmembrane proteins (PotB and PotC) and a solute-binding protein (PotD).

It is found in the cell membrane. It carries out the reaction ATP + H2O + polyamine-[polyamine-binding protein]Side 1 = ADP + phosphate + polyamineSide 2 + [polyamine-binding protein]Side 1.. In terms of biological role, part of the ABC transporter complex PotABCD involved in spermidine/putrescine import. Responsible for energy coupling to the transport system. This is Spermidine/putrescine import ATP-binding protein PotA from Streptococcus sanguinis (strain SK36).